Consider the following 651-residue polypeptide: Intraflagellar transport protein 70A (651 aa).

TPR repeat units follow at residues Asp8–Ser41, Arg42–Val75, Pro140–Lys173, Asp175–Glu207, Leu372–Thr405, Ile410–His443, and Ile445–Asn478. Residues Tyr494–Asn521 adopt a coiled-coil conformation. Residues Cys530 to Lys563 form a TPR 8 repeat.

It belongs to the TTC30/dfy-1/fleer family.

The protein localises to the cell projection. The protein resides in the cilium. Its function is as follows. Required for polyglutamylation of axonemal tubulin. Plays a role in anterograde intraflagellar transport (IFT), the process by which cilia precursors are transported from the base of the cilium to the site of their incorporation at the tip. The sequence is that of Intraflagellar transport protein 70A (ift70a) from Xenopus laevis (African clawed frog).